Reading from the N-terminus, the 239-residue chain is Ubiquinone biosynthesis O-methyltransferase (239 aa).

Residues Arg-44, Gly-63, Asp-84, and Met-128 each contribute to the S-adenosyl-L-methionine site.

Belongs to the methyltransferase superfamily. UbiG/COQ3 family.

It carries out the reaction a 3-demethylubiquinol + S-adenosyl-L-methionine = a ubiquinol + S-adenosyl-L-homocysteine + H(+). The enzyme catalyses a 3-(all-trans-polyprenyl)benzene-1,2-diol + S-adenosyl-L-methionine = a 2-methoxy-6-(all-trans-polyprenyl)phenol + S-adenosyl-L-homocysteine + H(+). Its pathway is cofactor biosynthesis; ubiquinone biosynthesis. Its function is as follows. O-methyltransferase that catalyzes the 2 O-methylation steps in the ubiquinone biosynthetic pathway. The sequence is that of Ubiquinone biosynthesis O-methyltransferase from Xanthomonas euvesicatoria pv. vesicatoria (strain 85-10) (Xanthomonas campestris pv. vesicatoria).